Here is a 644-residue protein sequence, read N- to C-terminus: 3D-(3,5/4)-trihydroxycyclohexane-1,2-dione hydrolase (644 aa).

Glutamate 65 is a binding site for thiamine diphosphate. The tract at residues serine 442 to glycine 522 is thiamine pyrophosphate binding. Mg(2+)-binding residues include aspartate 493 and asparagine 520.

The protein belongs to the TPP enzyme family. Mg(2+) serves as cofactor. Requires thiamine diphosphate as cofactor.

The enzyme catalyses 3D-3,5/4-trihydroxycyclohexane-1,2-dione + H2O = 5-deoxy-D-glucuronate + H(+). The protein operates within polyol metabolism; myo-inositol degradation into acetyl-CoA; acetyl-CoA from myo-inositol: step 3/7. In terms of biological role, involved in the cleavage of the C1-C2 bond of 3D-(3,5/4)-trihydroxycyclohexane-1,2-dione (THcHDO) to yield 5-deoxy-glucuronate (5DG). This Clostridium tetani (strain Massachusetts / E88) protein is 3D-(3,5/4)-trihydroxycyclohexane-1,2-dione hydrolase.